The primary structure comprises 362 residues: Aminomethyltransferase (362 aa).

The protein belongs to the GcvT family. The glycine cleavage system is composed of four proteins: P, T, L and H.

It carries out the reaction N(6)-[(R)-S(8)-aminomethyldihydrolipoyl]-L-lysyl-[protein] + (6S)-5,6,7,8-tetrahydrofolate = N(6)-[(R)-dihydrolipoyl]-L-lysyl-[protein] + (6R)-5,10-methylene-5,6,7,8-tetrahydrofolate + NH4(+). The glycine cleavage system catalyzes the degradation of glycine. In Colwellia psychrerythraea (strain 34H / ATCC BAA-681) (Vibrio psychroerythus), this protein is Aminomethyltransferase.